A 439-amino-acid chain; its full sequence is Acyl-coenzyme A thioesterase 9, mitochondrial (439 aa).

A mitochondrion-targeting transit peptide spans 1–21; that stretch reads MRRAALRLCALGKGQLTPGRG. 2 consecutive HotDog ACOT-type domains span residues 84–209 and 289–401; these read KDSY…RDSE and ENSK…EKEV. Residue Lys-103 is modified to N6-acetyllysine.

Belongs to the acyl coenzyme A hydrolase family. Interacts with NYAP1, NYAP2 and MYO16.

The protein resides in the mitochondrion. It is found in the mitochondrion matrix. It localises to the mitochondrion inner membrane. It catalyses the reaction butanoyl-CoA + H2O = butanoate + CoA + H(+). The catalysed reaction is propanoyl-CoA + H2O = propanoate + CoA + H(+). The enzyme catalyses hexadecanoyl-CoA + H2O = hexadecanoate + CoA + H(+). It carries out the reaction octanoyl-CoA + H2O = octanoate + CoA + H(+). It catalyses the reaction decanoyl-CoA + H2O = decanoate + CoA + H(+). The catalysed reaction is tetradecanoyl-CoA + H2O = tetradecanoate + CoA + H(+). The enzyme catalyses 4,8-dimethylnonanoyl-CoA + H2O = 4,8-dimethylnonanoate + CoA + H(+). It carries out the reaction 3-methylbutanoyl-CoA + H2O = 3-methylbutanoate + CoA + H(+). It catalyses the reaction 2-methylpropanoyl-CoA + H2O = 2-methylpropanoate + CoA + H(+). The protein operates within lipid metabolism; fatty acid metabolism. Strongly inhibited by NADH and CoA. Mitochondrial acyl-CoA thioesterase. Catalyzes the hydrolysis of acyl-CoAs into free fatty acids and coenzyme A (CoA), regulating their respective intracellular levels. Regulates both mitochondrial lipid and amino acid metabolism. This chain is Acyl-coenzyme A thioesterase 9, mitochondrial, found in Homo sapiens (Human).